A 413-amino-acid chain; its full sequence is High zinc activated nuclear receptor protein (413 aa).

The nuclear receptor DNA-binding region spans 11-86 (LGNCKICLQR…EGMKIELVQL (76 aa)). 2 consecutive NR C4-type zinc fingers follow at residues 14–34 (CKIC…CRAC) and 50–69 (CKEK…CRSC). Positions 101–412 (SIDPLFTPNV…TSQCIVHTKN (312 aa)) are required for zinc-binding. Residues 135–396 (QMTSGYAMFL…VCCKNFKEDA (262 aa)) enclose the NR LBD domain.

It belongs to the nuclear hormone receptor family. Weakly expressed in intestinal cells in the absence of zinc supplementation. Upon zinc supplementation, accumulates in alimentary tract cells, and it is mainly expressed in the intestine.

It is found in the nucleus. Its subcellular location is the cytoplasm. Functionally, nuclear receptor transcription factor that binds to DNA enhancer elements to promote the transcription of genes required to maintain micronutrient homeostasis. Direct binding to its ligand zinc allows for nuclear accumulation and activation, which thereby induces the transcription of genes required to promote the storage and detoxification of excess dietary zinc. This in turn, allows for internal zinc levels to be detected and regulated. The chain is High zinc activated nuclear receptor protein from Caenorhabditis elegans.